The sequence spans 550 residues: Chaperonin GroEL (550 aa).

ATP contacts are provided by residues 29–32 (TAGP), Lys-50, 86–90 (DGTTT), Gly-418, and Asp-499.

Belongs to the chaperonin (HSP60) family. As to quaternary structure, forms a cylinder of 14 subunits composed of two heptameric rings stacked back-to-back. Interacts with the co-chaperonin GroES.

The protein resides in the cytoplasm. It catalyses the reaction ATP + H2O + a folded polypeptide = ADP + phosphate + an unfolded polypeptide.. Functionally, together with its co-chaperonin GroES, plays an essential role in assisting protein folding. The GroEL-GroES system forms a nano-cage that allows encapsulation of the non-native substrate proteins and provides a physical environment optimized to promote and accelerate protein folding. The chain is Chaperonin GroEL from Wolbachia sp. subsp. Brugia malayi (strain TRS).